Consider the following 983-residue polypeptide: Polyhomeotic-like protein 3 (983 aa).

Disordered regions lie at residues 1–34, 103–149, 225–283, 313–332, 339–410, 477–509, and 601–620; these read MDTE…MQQP, LSSG…SSTS, VLSS…TAVT, LHSP…QQQQ, LQNS…SQSP, PGQQ…STSP, and DECV…PAAI. Low complexity-rich tracts occupy residues 9 to 29 and 103 to 126; these read TSSV…TSSS and LSSG…SQTS. Residues 127-139 show a composition bias toward polar residues; it reads INLSTSPTPAQLI. A compositionally biased stretch (low complexity) spans 140-149; it reads SRSQASSSTS. A compositionally biased stretch (polar residues) spans 225 to 257; it reads VLSSSQNGPPKSTSQTQSLTICHNKTTVTSSKI. The span at 258–271 shows a compositional bias: basic and acidic residues; the sequence is SQRDPSPESNKKGE. A phosphoserine mark is found at Ser263 and Ser272. Polar residues predominate over residues 274-283; the sequence is SLESRSTAVT. Phosphoserine is present on Ser315. A compositionally biased stretch (polar residues) spans 365 to 383; sequence SNAQSQHCSPIQSHPSPLT. The segment covering 384–398 has biased composition (low complexity); the sequence is VSPNQSQSAQQSVVV. The span at 477 to 489 shows a compositional bias: polar residues; that stretch reads PGQQIVSPSHQQY. The span at 490–506 shows a compositional bias: low complexity; it reads SSLQSSPIPIASPPQMS. Phosphothreonine occurs at positions 609 and 614. Ser616 bears the Phosphoserine mark. Glycyl lysine isopeptide (Lys-Gly) (interchain with G-Cter in SUMO2) cross-links involve residues Lys691 and Lys732. The HD1 motif lies at 691–720; that stretch reads KPPQAIVKPQILTHVIEGFVIQEGLEPFPV. Ser761 and Ser762 each carry phosphoserine. The FCS-type zinc finger occupies 776 to 810; it reads EEMDSELLKCEFCGKMGYANEFLRSKRFCTMSCAK. Zn(2+) is bound by residues Cys785, Cys788, Cys804, and Cys808. A Glycyl lysine isopeptide (Lys-Gly) (interchain with G-Cter in SUMO2) cross-link involves residue Lys810. Disordered regions lie at residues 827–847 and 864–889; these read RKPD…PDGA and EEDL…SERE. The SAM domain maps to 919–983; the sequence is WTVDDVWAFI…CARINSLKES (65 aa).

Component of a PRC1-like complex.

The protein resides in the nucleus. Component of a Polycomb group (PcG) multiprotein PRC1-like complex, a complex class required to maintain the transcriptionally repressive state of many genes, including Hox genes, throughout development. PcG PRC1 complex acts via chromatin remodeling and modification of histones; it mediates monoubiquitination of histone H2A 'Lys-119', rendering chromatin heritably changed in its expressibility. In Homo sapiens (Human), this protein is Polyhomeotic-like protein 3 (PHC3).